Here is a 483-residue protein sequence, read N- to C-terminus: Regulatory protein ViaA (483 aa).

The protein belongs to the ViaA family. As to quaternary structure, homodimer. Interacts with RavA.

It localises to the cytoplasm. Functionally, component of the RavA-ViaA chaperone complex, which may act on the membrane to optimize the function of some of the respiratory chains. ViaA stimulates the ATPase activity of RavA. The chain is Regulatory protein ViaA from Salmonella schwarzengrund (strain CVM19633).